The primary structure comprises 387 residues: RNA polymerase II elongation factor ELL3 (387 aa).

Disordered regions lie at residues 127–148 (LTEGTRESESWQDSEDEPEGHP) and 186–275 (LSNR…EEVP). Over residues 230–239 (SPLQGLSNQD) the composition is skewed to polar residues. Ser-240 is modified (phosphoserine). A compositionally biased stretch (acidic residues) spans 240–251 (SPEEQDWGQDAD). Residues 257–271 (EQSLSVQSASESPSP) show a composition bias toward low complexity. The OCEL domain maps to 275 to 385 (PDYLLQYSTI…LILEFEEKNR (111 aa)).

Belongs to the ELL/occludin family. As to quaternary structure, interacts with AFF4. Component of the super elongation complex (SEC), at least composed of EAF1, EAF2, CDK9, MLLT3/AF9, AFF (AFF1 or AFF4), the P-TEFb complex and ELL (ELL, ELL2 or ELL3). Component of the little elongation complex (LEC), at least composed of ELL (ELL, ELL2 or ELL3), ZC3H8, ICE1 and ICE2.

It localises to the nucleus. Its function is as follows. Enhancer-binding elongation factor that specifically binds enhancers in embryonic stem cells (ES cells), marks them, and is required for their future activation during stem cell specification. Elongation factor component of the super elongation complex (SEC), a complex required to increase the catalytic rate of RNA polymerase II transcription by suppressing transient pausing by the polymerase at multiple sites along the DNA. Component of the little elongation complex (LEC), a complex required to regulate small nuclear RNA (snRNA) gene transcription by RNA polymerase II and III. Does not only bind to enhancer regions of active genes, but also marks the enhancers that are in a poised or inactive state in ES cells and is required for establishing proper RNA polymerase II occupancy at developmentally regulated genes in a cohesin-dependent manner. Probably required for priming developmentally regulated genes for later recruitment of the super elongation complex (SEC), for transcriptional activation during differentiation. Required for recruitment of P-TEFb within SEC during differentiation. Probably preloaded on germ cell chromatin, suggesting that it may prime gene activation by marking enhancers as early as in the germ cells. Promoting epithelial-mesenchymal transition (EMT). This is RNA polymerase II elongation factor ELL3 (Ell3) from Rattus norvegicus (Rat).